Consider the following 142-residue polypeptide: Large ribosomal subunit protein uL11 (142 aa).

The protein belongs to the universal ribosomal protein uL11 family. Part of the ribosomal stalk of the 50S ribosomal subunit. Interacts with L10 and the large rRNA to form the base of the stalk. L10 forms an elongated spine to which L12 dimers bind in a sequential fashion forming a multimeric L10(L12)X complex. Post-translationally, one or more lysine residues are methylated.

In terms of biological role, forms part of the ribosomal stalk which helps the ribosome interact with GTP-bound translation factors. The sequence is that of Large ribosomal subunit protein uL11 from Rhizobium meliloti (strain 1021) (Ensifer meliloti).